The chain runs to 188 residues: UPF0461 protein C5orf24 homolog (188 aa).

Residue S37 is modified to Phosphoserine. K75 participates in a covalent cross-link: Glycyl lysine isopeptide (Lys-Gly) (interchain with G-Cter in SUMO2). The segment at 79-142 is disordered; the sequence is KKKKNLNRSG…GYKVSPGRPP (64 aa). Residues 80–92 are compositionally biased toward basic residues; that stretch reads KKKNLNRSGKRGR. Over residues 94–107 the composition is skewed to polar residues; it reads SGTTKSAGYRTSTG. Phosphoserine occurs at positions 121 and 180. K184 is covalently cross-linked (Glycyl lysine isopeptide (Lys-Gly) (interchain with G-Cter in SUMO2)).

It belongs to the UPF0461 family.

This is UPF0461 protein C5orf24 homolog from Bos taurus (Bovine).